A 209-amino-acid polypeptide reads, in one-letter code: Thiamine-phosphate synthase (209 aa).

4-amino-2-methyl-5-(diphosphooxymethyl)pyrimidine contacts are provided by residues 32 to 36 (QLRMK) and aspartate 64. Mg(2+)-binding residues include aspartate 65 and aspartate 84. Threonine 103 serves as a coordination point for 4-amino-2-methyl-5-(diphosphooxymethyl)pyrimidine. A 2-[(2R,5Z)-2-carboxy-4-methylthiazol-5(2H)-ylidene]ethyl phosphate-binding site is contributed by 129 to 131 (TTT). Position 132 (lysine 132) interacts with 4-amino-2-methyl-5-(diphosphooxymethyl)pyrimidine. Glycine 165 provides a ligand contact to 2-[(2R,5Z)-2-carboxy-4-methylthiazol-5(2H)-ylidene]ethyl phosphate.

It belongs to the thiamine-phosphate synthase family. It depends on Mg(2+) as a cofactor.

The enzyme catalyses 2-[(2R,5Z)-2-carboxy-4-methylthiazol-5(2H)-ylidene]ethyl phosphate + 4-amino-2-methyl-5-(diphosphooxymethyl)pyrimidine + 2 H(+) = thiamine phosphate + CO2 + diphosphate. The catalysed reaction is 2-(2-carboxy-4-methylthiazol-5-yl)ethyl phosphate + 4-amino-2-methyl-5-(diphosphooxymethyl)pyrimidine + 2 H(+) = thiamine phosphate + CO2 + diphosphate. It catalyses the reaction 4-methyl-5-(2-phosphooxyethyl)-thiazole + 4-amino-2-methyl-5-(diphosphooxymethyl)pyrimidine + H(+) = thiamine phosphate + diphosphate. It participates in cofactor biosynthesis; thiamine diphosphate biosynthesis; thiamine phosphate from 4-amino-2-methyl-5-diphosphomethylpyrimidine and 4-methyl-5-(2-phosphoethyl)-thiazole: step 1/1. Condenses 4-methyl-5-(beta-hydroxyethyl)thiazole monophosphate (THZ-P) and 2-methyl-4-amino-5-hydroxymethyl pyrimidine pyrophosphate (HMP-PP) to form thiamine monophosphate (TMP). This is Thiamine-phosphate synthase from Bacteroides thetaiotaomicron (strain ATCC 29148 / DSM 2079 / JCM 5827 / CCUG 10774 / NCTC 10582 / VPI-5482 / E50).